The following is a 120-amino-acid chain: Large ribosomal subunit protein eL34z (120 aa).

The interval 31 to 51 is disordered; sequence VYQTTKKRASGPKCPVTGKRI.

Belongs to the eukaryotic ribosomal protein eL34 family.

This chain is Large ribosomal subunit protein eL34z (RPL34A), found in Arabidopsis thaliana (Mouse-ear cress).